The following is a 240-amino-acid chain: Thymidylate kinase (240 aa).

10–17 serves as a coordination point for ATP; sequence GINGVGKS.

This sequence belongs to the thymidylate kinase family.

The enzyme catalyses dTMP + ATP = dTDP + ADP. It functions in the pathway pyrimidine metabolism; dTTP biosynthesis. In terms of biological role, catalyzes the conversion of dTMP to dTDP. This chain is Thymidylate kinase (TMK), found in African swine fever virus (strain Badajoz 1971 Vero-adapted) (Ba71V).